A 352-amino-acid chain; its full sequence is tRNA-specific 2-thiouridylase MnmA (352 aa).

ATP-binding positions include 7-14 (GLSGGVDS) and Leu-33. Residue Cys-94 is the Nucleophile of the active site. Cys-94 and Cys-193 are disulfide-bonded. Gly-119 lines the ATP pocket. Residues 143 to 145 (KDQ) are interaction with tRNA. Catalysis depends on Cys-193, which acts as the Cysteine persulfide intermediate. The interaction with tRNA stretch occupies residues 298–299 (RY).

This sequence belongs to the MnmA/TRMU family.

The protein resides in the cytoplasm. The enzyme catalyses S-sulfanyl-L-cysteinyl-[protein] + uridine(34) in tRNA + AH2 + ATP = 2-thiouridine(34) in tRNA + L-cysteinyl-[protein] + A + AMP + diphosphate + H(+). Its function is as follows. Catalyzes the 2-thiolation of uridine at the wobble position (U34) of tRNA, leading to the formation of s(2)U34. The polypeptide is tRNA-specific 2-thiouridylase MnmA (Microcystis aeruginosa (strain NIES-843 / IAM M-2473)).